The chain runs to 45 residues: Photosystem II reaction center protein K (45 aa).

The propeptide occupies 1 to 8 (MEAALLLA). A helical transmembrane segment spans residues 24–44 (LPIIPLFFLALAFVWQAAVGF).

This sequence belongs to the PsbK family. In terms of assembly, PSII is composed of 1 copy each of membrane proteins PsbA, PsbB, PsbC, PsbD, PsbE, PsbF, PsbH, PsbI, PsbJ, PsbK, PsbL, PsbM, PsbT, PsbX, PsbY, PsbZ, Psb30/Ycf12, peripheral proteins PsbO, CyanoQ (PsbQ), PsbU, PsbV and a large number of cofactors. It forms dimeric complexes.

It localises to the cellular thylakoid membrane. In terms of biological role, one of the components of the core complex of photosystem II (PSII). PSII is a light-driven water:plastoquinone oxidoreductase that uses light energy to abstract electrons from H(2)O, generating O(2) and a proton gradient subsequently used for ATP formation. It consists of a core antenna complex that captures photons, and an electron transfer chain that converts photonic excitation into a charge separation. The protein is Photosystem II reaction center protein K of Rippkaea orientalis (strain PCC 8801 / RF-1) (Cyanothece sp. (strain PCC 8801)).